Consider the following 451-residue polypeptide: Cysteine protease ATG4 (451 aa).

The active-site Nucleophile is the cysteine 122. Catalysis depends on residues aspartate 297 and histidine 299.

Belongs to the peptidase C54 family. Interacts with ATG8.

Its subcellular location is the cytoplasm. The protein resides in the nucleus. It is found in the preautophagosomal structure. The enzyme catalyses [protein]-C-terminal L-amino acid-glycyl-phosphatidylethanolamide + H2O = [protein]-C-terminal L-amino acid-glycine + a 1,2-diacyl-sn-glycero-3-phosphoethanolamine. In terms of biological role, cysteine protease that plays a key role in cytoplasm to vacuole transport (Cvt) and autophagy by mediating both proteolytic activation and delipidation of ATG8. Required for selective autophagic degradation of the nucleus (nucleophagy) as well as for mitophagy which contributes to regulate mitochondrial quantity and quality by eliminating the mitochondria to a basal level to fulfill cellular energy requirements and preventing excess ROS production. The protease activity is required for proteolytic activation of ATG8: cleaves the C-terminal amino acid of ATG8 to reveal a C-terminal glycine. ATG8 ubiquitin-like activity requires the exposure of the glycine at the C-terminus for its conjugation to phosphatidylethanolamine (PE) and its insertion to membranes, which is necessary for autophagy. The ATG8-PE conjugate mediates tethering between adjacent membranes and stimulates membrane hemifusion, leading to expansion of the autophagosomal membrane during autophagy. In addition to the protease activity, also catalyzes deconjugation of PE-conjugated forms of ATG8 during macroautophagy: ATG8 delipidation is required to release the protein from membranes, which facilitates multiple events during macroautophagy, and especially for efficient autophagosome biogenesis, the assembly of ATG9-containing tubulovesicular clusters into phagophores/autophagosomes, and for the disassembly of PAS-associated ATG components. ATG8 delipidation by ATG4 also recycles ATG8-PE generated on inappropriate membranes to maintain a reservoir of unlipidated ATG8 that is required for autophagosome formation at the PAS. The sequence is that of Cysteine protease ATG4 from Kluyveromyces marxianus (strain DMKU3-1042 / BCC 29191 / NBRC 104275) (Yeast).